The sequence spans 144 residues: Large ribosomal subunit protein uL15 (144 aa).

Positions 1 to 48 (MIKLECLQDPSPRKRRTKLLGRGPSSGHGKTSGRGHKGDGSRSGYKRR) are disordered.

This sequence belongs to the universal ribosomal protein uL15 family. Part of the 50S ribosomal subunit.

Binds to the 23S rRNA. This chain is Large ribosomal subunit protein uL15, found in Chlamydia trachomatis serovar L2 (strain ATCC VR-902B / DSM 19102 / 434/Bu).